A 625-amino-acid chain; its full sequence is Probable potassium transport system protein Kup (625 aa).

The next 12 membrane-spanning stretches (helical) occupy residues 10 to 30 (LAAL…TSPL), 50 to 70 (LLGV…LKYV), 102 to 122 (YFPL…DSVI), 135 to 155 (LGVA…AILV), 172 to 192 (FGPV…VNII), 214 to 234 (GFLA…AEAL), 251 to 271 (FLIA…LLLL), 284 to 304 (LGAW…IIAS), 340 to 360 (IYIP…VIGF), 369 to 389 (AYGI…FFVI), 397 to 417 (LILC…LFSA), and 422 to 442 (LFHG…LMLT).

It belongs to the HAK/KUP transporter (TC 2.A.72) family.

It localises to the cell inner membrane. The enzyme catalyses K(+)(in) + H(+)(in) = K(+)(out) + H(+)(out). Functionally, transport of potassium into the cell. Likely operates as a K(+):H(+) symporter. The chain is Probable potassium transport system protein Kup from Herminiimonas arsenicoxydans.